A 918-amino-acid chain; its full sequence is Whirlin (918 aa).

A PDZ 1 domain is found at 141-224 (LVSLRRAKAH…LVLSVYSAGR (84 aa)). The tract at residues 240 to 266 (PQGRSTSPPSSLPQPHGSTLRQREDDR) is disordered. One can recognise a PDZ 2 domain in the interval 280 to 362 (KVNLVLGDGR…LILTVKDVGR (83 aa)). Disordered regions lie at residues 387–407 (NSAG…GFYK), 503–538 (SMKA…TSTT), and 560–824 (EGTG…LEPT). Low complexity predominate over residues 522–538 (SYSDTGSSTGSHGTSTT). Positions 563–572 (GETTQGSTNA) are enriched in polar residues. Composition is skewed to pro residues over residues 591–600 (IKPPPPPPPL) and 638–649 (RSPPPGTAPTPG). The segment covering 654-672 (QDSPSSPIYASISHANPSS) has biased composition (polar residues). The residue at position 696 (Ser-696) is a Phosphoserine. Polar residues-rich tracts occupy residues 754–773 (QTRT…TLSE) and 783–798 (EAST…SAKN). Residues 800–811 (NGKEQPRTERTA) are compositionally biased toward basic and acidic residues. One can recognise a PDZ 3 domain in the interval 827 to 910 (LVRVRKSAAT…TKERDYIDFL (84 aa)).

Forms homooligomers. Interacts (via C-terminal PDZ domain) with MYO15A; this interaction is necessary for localization of WHRN to stereocilia tips. Interacts (via C-terminal PDZ domain) with MPP1/p55. Interacts with LRRC4C/NGL1. Interacts with MYO7A. Interacts with RPGR. Interacts with EPS8. Interacts with CASK. Interacts with CIB2. Component of USH2 complex, composed of ADGRV1, PDZD7, USH2A and WHRN. Interacts (via PDZ domains) with PDZD7; the interaction is direct. Interacts (via N-terminal PDZ domain) with USH2A (via cytoplasmic region). Interacts with ADGRV1/MASS1 (via cytoplasmic region). In terms of tissue distribution, expressed in the retina. Colocalizes with RPGR in the photoreceptor connecting cilium, a thin bridge linking the cell body and the light-sensing outer segment (at protein level). Detected in the inner ear throughout development from embryonic day 12 to 20 days after birth. Displays a dynamic pattern of expression after birth, demonstrating an ordered appearance and fade-out across stereocilia rows. Isoforms 5, 6, 7 and 8 are not detected in the retina.

It localises to the cytoplasm. Its subcellular location is the cell projection. The protein localises to the stereocilium. The protein resides in the growth cone. It is found in the photoreceptor inner segment. It localises to the synapse. Functionally, involved in hearing and vision as member of the USH2 complex. Necessary for elongation and maintenance of inner and outer hair cell stereocilia in the organ of Corti in the inner ear. Involved in the maintenance of the hair bundle ankle region, which connects stereocilia in cochlear hair cells of the inner ear. In retina photoreceptors, required for the maintenance of periciliary membrane complex that seems to play a role in regulating intracellular protein transport. This is Whirlin from Mus musculus (Mouse).